We begin with the raw amino-acid sequence, 213 residues long: Protein DMP3 (213 aa).

The interval 1–27 (MSSPSSLTQRNPTSSQEQSESVPQLRR) is disordered. 4 helical membrane-spanning segments follow: residues 45 to 65 (LANL…PVFT), 74 to 94 (TQVL…LSSF), 136 to 156 (IRII…AVAL), and 176 to 196 (VLDI…LVFP).

It belongs to the plant DMP1 protein family. In terms of tissue distribution, expressed in leaves, siliques and roots (e.g. root hairs).

The protein resides in the endoplasmic reticulum membrane. Its function is as follows. Involved in membrane remodeling. This is Protein DMP3 from Arabidopsis thaliana (Mouse-ear cress).